An 86-amino-acid chain; its full sequence is Small ribosomal subunit protein bS20 (86 aa).

This sequence belongs to the bacterial ribosomal protein bS20 family.

Its function is as follows. Binds directly to 16S ribosomal RNA. The chain is Small ribosomal subunit protein bS20 from Oceanobacillus iheyensis (strain DSM 14371 / CIP 107618 / JCM 11309 / KCTC 3954 / HTE831).